A 42-amino-acid polypeptide reads, in one-letter code: Bacteriocin bavaricin-MN (42 aa).

A disulfide bridge links C10 with C15.

It belongs to the bacteriocin class IIA/YGNGV family.

Its subcellular location is the secreted. Has antimicrobial activity. This chain is Bacteriocin bavaricin-MN, found in Latilactobacillus sakei (Lactobacillus sakei).